Reading from the N-terminus, the 87-residue chain is Small ribosomal subunit protein bS20 (87 aa).

Residues 1 to 11 (MANHKSALKRI) are compositionally biased toward basic residues. A disordered region spans residues 1 to 23 (MANHKSALKRIKQTEKRTERNRH).

This sequence belongs to the bacterial ribosomal protein bS20 family.

Its function is as follows. Binds directly to 16S ribosomal RNA. The chain is Small ribosomal subunit protein bS20 from Geotalea uraniireducens (strain Rf4) (Geobacter uraniireducens).